The sequence spans 732 residues: Nephrocystin-1 (732 aa).

A coiled-coil region spans residues 3-105; that stretch reads ARRQRDPLQA…LQGLAVTISR (103 aa). At Tyr-46 the chain carries Phosphotyrosine; by FAK2. 2 disordered regions span residues 103–153 and 205–244; these read ISRE…KWST and TYLEPYSEEEEGQESSEEGSEEDVEAVDETADGAEVKQRT. 2 stretches are compositionally biased toward acidic residues: residues 115-145 and 210-236; these read TEEEEESESEDSEDSGGEEEDAEEEEEEKEE and YSEEEEGQESSEEGSEEDVEAVDETAD. Ser-121, Ser-123, and Ser-126 each carry phosphoserine; by CK2. Positions 127–150 form a coiled coil; that stretch reads EDSGGEEEDAEEEEEEKEENESHK. In terms of domain architecture, SH3 spans 152–212; the sequence is STGEEYIAVG…PRTYLEPYSE (61 aa). Residue Tyr-349 is modified to Phosphotyrosine; by FAK2. Tyr-721 carries the phosphotyrosine; by SRC modification.

It belongs to the nephrocystin-1 family. As to quaternary structure, interacts with BCAR1, PTK2B/PYK2 and tensin. Interacts with INVS and NPHP3. Interacts with PACS1; the interaction is dependent on NPHP1 phosphorylation by CK2. Interacts with KIF7. Interacts with AHI1 and TNK2. Interacts with NPHP4 in a complex containing NPHP1, NPHP4 and RPGRIP1L. Interacts with IQCB1; the interaction likely requires additional interactors. Interacts with ANKS3. Interacts with SPATA7. Interacts with FLNA. Phosphorylation by CK2 is required for the interaction with PACS1 and the targeting to the base region of cilia. Widespread expression, with highest levels in pituitary gland, spinal cord, thyroid gland, testis, skeletal muscle, lymph node and trachea. Weakly expressed in heart, kidney and pancreas. Expressed in nasal epithelial cells (at protein level). Expressed in the renal collecting duct (at protein level).

It localises to the cell junction. It is found in the adherens junction. The protein resides in the cell projection. The protein localises to the cilium. Its subcellular location is the cytoplasm. It localises to the cytoskeleton. It is found in the cilium axoneme. The protein resides in the tight junction. Its function is as follows. Together with BCAR1 it may play a role in the control of epithelial cell polarity. Involved in the organization of apical junctions in kidney cells together with NPHP4 and RPGRIP1L/NPHP8. Does not seem to be strictly required for ciliogenesis. Seems to help to recruit PTK2B/PYK2 to cell matrix adhesions, thereby initiating phosphorylation of PTK2B/PYK2 and PTK2B/PYK2-dependent signaling. May play a role in the regulation of intraflagellar transport (IFT) during cilia assembly. Required for normal retina development. In connecting photoreceptor cilia influences the movement of some IFT proteins such as IFT88 and WDR19. Involved in spermatogenesis. The protein is Nephrocystin-1 (NPHP1) of Homo sapiens (Human).